The primary structure comprises 101 residues: Co-chaperonin GroES (101 aa).

Belongs to the GroES chaperonin family. In terms of assembly, heptamer of 7 subunits arranged in a ring. Interacts with the chaperonin GroEL.

It localises to the cytoplasm. In terms of biological role, together with the chaperonin GroEL, plays an essential role in assisting protein folding. The GroEL-GroES system forms a nano-cage that allows encapsulation of the non-native substrate proteins and provides a physical environment optimized to promote and accelerate protein folding. GroES binds to the apical surface of the GroEL ring, thereby capping the opening of the GroEL channel. This Thermus thermophilus (strain ATCC BAA-163 / DSM 7039 / HB27) protein is Co-chaperonin GroES.